We begin with the raw amino-acid sequence, 404 residues long: Argininosuccinate synthase (404 aa).

ATP-binding positions include 10–18 (AYSGGLDTS) and Ala37. L-citrulline contacts are provided by Tyr88 and Ser93. Residue Gly118 participates in ATP binding. Positions 120, 124, and 125 each coordinate L-aspartate. Asn124 contributes to the L-citrulline binding site. L-citrulline is bound by residues Arg128, Ser178, Ser187, Glu263, and Tyr275.

It belongs to the argininosuccinate synthase family. Type 1 subfamily. As to quaternary structure, homotetramer.

The protein localises to the cytoplasm. It carries out the reaction L-citrulline + L-aspartate + ATP = 2-(N(omega)-L-arginino)succinate + AMP + diphosphate + H(+). It participates in amino-acid biosynthesis; L-arginine biosynthesis; L-arginine from L-ornithine and carbamoyl phosphate: step 2/3. This chain is Argininosuccinate synthase, found in Hahella chejuensis (strain KCTC 2396).